An 815-amino-acid chain; its full sequence is Ferripyoverdine receptor (815 aa).

The first 43 residues, 1 to 43 (MPAPHGLSPLSKAFLMRRAFQRRILPHSLAMALSLPLAGYVQA), serve as a signal peptide directing secretion. The region spanning 161–271 (TPRETPQSIT…LGATINLIRK (111 aa)) is the TBDR plug domain. Residues 276-815 (EFKGHVELGA…NLMFSTRWDF (540 aa)) form the TBDR beta-barrel domain. The TonB C-terminal box signature appears at 798–815 (SASYGDPRNLMFSTRWDF).

Belongs to the TonB-dependent receptor family.

It localises to the cell outer membrane. In terms of biological role, receptor for the siderophore ferripyoverdine. This chain is Ferripyoverdine receptor (fpvA), found in Pseudomonas aeruginosa (strain ATCC 15692 / DSM 22644 / CIP 104116 / JCM 14847 / LMG 12228 / 1C / PRS 101 / PAO1).